The primary structure comprises 240 residues: 2,3,4,5-tetrahydropyridine-2,6-dicarboxylate N-acetyltransferase (240 aa).

The protein belongs to the transferase hexapeptide repeat family. DapH subfamily.

It carries out the reaction (S)-2,3,4,5-tetrahydrodipicolinate + acetyl-CoA + H2O = L-2-acetamido-6-oxoheptanedioate + CoA. The protein operates within amino-acid biosynthesis; L-lysine biosynthesis via DAP pathway; LL-2,6-diaminopimelate from (S)-tetrahydrodipicolinate (acetylase route): step 1/3. Its function is as follows. Catalyzes the transfer of an acetyl group from acetyl-CoA to tetrahydrodipicolinate. The protein is 2,3,4,5-tetrahydropyridine-2,6-dicarboxylate N-acetyltransferase of Bacillus cytotoxicus (strain DSM 22905 / CIP 110041 / 391-98 / NVH 391-98).